The following is a 432-amino-acid chain: Nematocyst expressed protein 3-like (432 aa).

The N-terminal stretch at 1–19 (MRVVYLVLVVAVIIAITEA) is a signal peptide. 6 cysteine pairs are disulfide-bonded: Cys-52/Cys-91, Cys-59/Cys-84, Cys-73/Cys-88, Cys-125/Cys-140, Cys-157/Cys-176, and Cys-166/Cys-180. ShKT domains are found at residues 59-91 (CKAF…CKLC), 107-143 (VVRA…CMLC), and 149-183 (GPCD…CDVY). Residues 235 to 313 (GAQYPAATAA…PEAAPSEPEA (79 aa)) show a composition bias toward low complexity. Residues 235 to 432 (GAQYPAATAA…KSKSGHKRHH (198 aa)) form a disordered region. Residues 314 to 330 (APAPAPEMAPAPAPEMA) are compositionally biased toward pro residues. The span at 331–408 (PAPEAASAPA…AAPSEQPMPG (78 aa)) shows a compositional bias: low complexity. The segment covering 409 to 432 (KKSKSKPSKRKGVKKSKSGHKRHH) has biased composition (basic residues).

This sequence belongs to the NEP3 family. In terms of tissue distribution, nematocytes. In late planulae, transcripts are found throughout the ectoderm in nematocytes, with high concentration of expressing cells in the oral pole. In primary polyps, is expressed in nematocytes in the body wall and physa ectoderm and in the upper and lower pharynx.

The protein resides in the nematocyst. It is found in the secreted. Probable toxin. The polypeptide is Nematocyst expressed protein 3-like (Nematostella vectensis (Starlet sea anemone)).